The following is a 440-amino-acid chain: Adenylosuccinate synthetase (440 aa).

GTP is bound by residues 11–17 and 39–41; these read GDEGKGG and GHT. The active-site Proton acceptor is aspartate 12. The Mg(2+) site is built by aspartate 12 and glycine 39. IMP-binding positions include 12–15, 37–40, threonine 127, arginine 141, glutamine 230, threonine 245, and arginine 311; these read DEGK and NAGH. The Proton donor role is filled by histidine 40. Residue 307-313 participates in substrate binding; that stretch reads TVTGRPR. GTP contacts are provided by residues arginine 313, 339–341, and 424–426; these read HLD and GVG.

This sequence belongs to the adenylosuccinate synthetase family. In terms of assembly, homodimer. Mg(2+) serves as cofactor.

The protein resides in the cytoplasm. It carries out the reaction IMP + L-aspartate + GTP = N(6)-(1,2-dicarboxyethyl)-AMP + GDP + phosphate + 2 H(+). The protein operates within purine metabolism; AMP biosynthesis via de novo pathway; AMP from IMP: step 1/2. Functionally, plays an important role in the de novo pathway of purine nucleotide biosynthesis. Catalyzes the first committed step in the biosynthesis of AMP from IMP. This is Adenylosuccinate synthetase from Halobacterium salinarum (strain ATCC 29341 / DSM 671 / R1).